A 595-amino-acid polypeptide reads, in one-letter code: P2X purinoceptor 7 (595 aa).

Residues 1-22 (MPACCSWNDVLQYETNKVTRIQ) lie on the Cytoplasmic side of the membrane. Cys-4 carries S-palmitoyl cysteine lipidation. The helical transmembrane segment at 23–46 (STNYGTVKWVLHMIVFSYISFALV) threads the bilayer. Residues 47–328 (SDKLYQRKEP…ILVFGTGGKF (282 aa)) lie on the Extracellular side of the membrane. Residue Asn-74 is glycosylated (N-linked (GlcNAc...) asparagine). 3 disulfide bridges follow: Cys-119–Cys-168, Cys-129–Cys-152, and Cys-135–Cys-162. ADP-ribosylarginine; by ART2B is present on residues Arg-125 and Arg-133. Asn-187 is a glycosylation site (N-linked (GlcNAc...) asparagine). Position 189 (Thr-189) interacts with ATP. N-linked (GlcNAc...) asparagine glycans are attached at residues Asn-202 and Asn-213. Cysteines 216 and 226 form a disulfide. Asn-241 carries N-linked (GlcNAc...) asparagine glycosylation. Cys-260 and Cys-269 are disulfide-bonded. Positions 294 and 311 each coordinate ATP. Residues 329–353 (DIIQLVVYIGSTLSYFGLATVCIDL) form a helical membrane-spanning segment. Ser-342 is a Na(+) binding site. At 354-595 (LINTYSSAFC…GQYSGFKYPY (242 aa)) the chain is on the cytoplasmic side. The tract at residues 360–377 (SAFCRSGVYPYCKCCEPC) is C-cys anchor. S-palmitoyl cysteine attachment occurs at residues Cys-363, Cys-374, and Cys-377. Position 390 is a phosphoserine (Ser-390). The cytoplasmic ballast stretch occupies residues 395–595 (KPTLKYVSFV…GQYSGFKYPY (201 aa)). Cys-479, Cys-499, and Cys-506 together coordinate Zn(2+). Positions 546, 547, 550, and 567 each coordinate GTP. Residue Cys-572 coordinates Zn(2+). GTP contacts are provided by Lys-583, Ser-589, and Gly-590.

It belongs to the P2X receptor family. In terms of assembly, homotrimers. Interacts with LAMA3, ITGB2, ACTB, ACTN4, SVIL, MPP3, HSPA1, HSPCB, HSPA8, PIK230 and PTPRB. Interacts (via C-terminus) with EMP2. Phosphorylation results in its inactivation. Post-translationally, ADP-ribosylation at Arg-125 is necessary and sufficient to activate P2RX7 and gate the channel. In terms of processing, palmitoylation of several cysteines in the C-terminal cytoplasmic tail is required for efficient localization to cell surface. Palmitoylation prevents channel desensitization by physically anchoring the palmitoylated groups to the membrane.

The protein resides in the cell membrane. It catalyses the reaction Ca(2+)(in) = Ca(2+)(out). The enzyme catalyses K(+)(in) = K(+)(out). It carries out the reaction Na(+)(in) = Na(+)(out). With respect to regulation, activated by high extracellular ATP levels (0.1-2.5 mM). The synthetic analog 2'(3')-O-(4-benzoylbenzoyl)ATP (BzATP) acts as a potent agonist. Does not undergo desensitization, instead, undergoes a facilitation process where currents progressively increase with repetitive or prolonged agonist application. Palmitoylation prevents channel desensitization. The permeability of the P2RX7 channel is modulated by the amount of cholesterol in the plasma membrane. Its function is as follows. ATP-gated nonselective transmembrane cation channel. Requires high millimolar-range concentrations of ATP to become activated. ATP binding trigers the rapid opening of the channel and allows Na(+) and Ca(2+) influx and K(+) efflux. Has also the ability to form a large pore in the cell membrane, allowing the passage of large cationic molecules. In microglia, may mediate NADPH transport across the plasma membrane. In immune cells, P2RX7 acts as a molecular sensor in pathological inflammatory states by detecting and responding to high local concentrations of extracellar ATP. In microglial cells, P2RX7 activation leads to the release of pro-inflammatory cytokines, such as IL-1beta and IL-18, through the activation of the NLRP3 inflammasome and caspase-1. Cooperates with KCNK6 to activate NLRP3 inflammasome. Activates death pathways leading to apoptosis and autophagy. Activates death pathways leading to pyroptosis. This Mus musculus (Mouse) protein is P2X purinoceptor 7 (P2rx7).